A 215-amino-acid chain; its full sequence is Ribonuclease T (215 aa).

Residues 20–194 form the Exonuclease domain; that stretch reads VVIDVETAGF…YDTEQTAQLF (175 aa). Mg(2+) is bound by residues Asp23, Glu25, His181, and Asp186. The Proton donor/acceptor role is filled by His181.

It belongs to the RNase T family. In terms of assembly, homodimer. Requires Mg(2+) as cofactor.

Its function is as follows. Trims short 3' overhangs of a variety of RNA species, leaving a one or two nucleotide 3' overhang. Responsible for the end-turnover of tRNA: specifically removes the terminal AMP residue from uncharged tRNA (tRNA-C-C-A). Also appears to be involved in tRNA biosynthesis. The polypeptide is Ribonuclease T (Klebsiella pneumoniae subsp. pneumoniae (strain ATCC 700721 / MGH 78578)).